The following is a 507-amino-acid chain: Inositol-3-phosphate synthase (507 aa).

Residues Gly70, Gly71, Asn72, Asn73, Asp143, Ile180, Gln190, Arg193, Thr230, Ala231, Asn232, Thr233, Gly281, Ser282, Asp306, Ser309, Asn340, Asn341, Asp342, Lys355, Ala391, Asp419, and Ser420 each contribute to the NAD(+) site.

This sequence belongs to the myo-inositol 1-phosphate synthase family. NAD(+) serves as cofactor.

Its subcellular location is the cytoplasm. It localises to the cytosol. It is found in the nucleus. The catalysed reaction is D-glucose 6-phosphate = 1D-myo-inositol 3-phosphate. The protein operates within polyol metabolism; myo-inositol biosynthesis; myo-inositol from D-glucose 6-phosphate: step 1/2. Key enzyme in myo-inositol biosynthesis pathway that catalyzes the conversion of glucose 6-phosphate to 1-myo-inositol 1-phosphate in a NAD-dependent manner. This chain is Inositol-3-phosphate synthase, found in Citrus paradisi (Grapefruit).